Reading from the N-terminus, the 131-residue chain is Small ribosomal subunit protein bS6 (131 aa).

The disordered stretch occupies residues 92–131 (RVDEHKDGPSVQMQKRDERERGDRGDRGERRERRDRDDRN).

The protein belongs to the bacterial ribosomal protein bS6 family.

In terms of biological role, binds together with bS18 to 16S ribosomal RNA. The protein is Small ribosomal subunit protein bS6 of Paracoccus denitrificans (strain Pd 1222).